Here is a 404-residue protein sequence, read N- to C-terminus: Multidrug resistance protein MdtG (404 aa).

A run of 11 helical transmembrane segments spans residues 19–39 (LGCF…PLYV), 56–76 (LVFS…GGLA), 90–110 (LGMA…QFLI), 113–133 (ALLG…ATQV), 144–164 (TLST…GLLA), 171–191 (PVFF…FFFI), 222–242 (LFVT…ILTL), 254–274 (IAFI…LSAP), 288–308 (ILIV…FVQT), 317–337 (FLLG…LVYN), and 376–396 (AVFC…WNSL).

It belongs to the major facilitator superfamily. DHA1 family. MdtG (TC 2.A.1.2.20) subfamily.

It localises to the cell inner membrane. The sequence is that of Multidrug resistance protein MdtG from Salmonella arizonae (strain ATCC BAA-731 / CDC346-86 / RSK2980).